The chain runs to 330 residues: Phosphate acyltransferase (330 aa).

The protein belongs to the PlsX family. As to quaternary structure, homodimer. Probably interacts with PlsY.

It localises to the cytoplasm. The enzyme catalyses a fatty acyl-[ACP] + phosphate = an acyl phosphate + holo-[ACP]. The protein operates within lipid metabolism; phospholipid metabolism. Functionally, catalyzes the reversible formation of acyl-phosphate (acyl-PO(4)) from acyl-[acyl-carrier-protein] (acyl-ACP). This enzyme utilizes acyl-ACP as fatty acyl donor, but not acyl-CoA. This is Phosphate acyltransferase from Teredinibacter turnerae (strain ATCC 39867 / T7901).